A 416-amino-acid polypeptide reads, in one-letter code: PRKCA-binding protein (416 aa).

A PDZ domain is found at 22-105 (KVTLQKDAQN…EVTIHYNKLQ (84 aa)). Zn(2+) contacts are provided by C44 and C46. T82 carries the phosphothreonine modification. The AH domain maps to 144 to 357 (LCNDGLVKRL…CYAVLRDADV (214 aa)). The tract at residues 373-416 (PNQGGFTDGEDEEEEEEDGAAREVSKDARGATGPTDKGGSWCDS) is disordered. The span at 380–390 (DGEDEEEEEED) shows a compositional bias: acidic residues. Basic and acidic residues predominate over residues 391 to 401 (GAAREVSKDAR). The S-palmitoyl cysteine; by DHHC8 moiety is linked to residue C414.

In terms of assembly, monomer and homodimer. Interacts with CXADR. Interacts presynaptically with the glutamate receptors GRIA2, GRIA3, GRIK3, isoform 3 of GRIA4, isoform A of GRM4, GRM7 and GRM8; with NAPA and NAPB; and with BTG2. The interaction with NAPA and NAPB disrupts the interaction with GRIA2, conducting to the internalization of GRIA2. Interacts with PRKCA; with the amine transporters SLC6A2 and SLC6A3; with the channels ASIC1 and ASIC2; with the GTP-binding proteins ARF1 and ARF3; with the ephrin receptor tyrosine kinases EPHA7, EPHB1 and EPHB2; with ERBB2 and through its PDZ domain with the C-terminal tail of PRLHR. Interacts with UNC5A. Interacts (via AH domain) with NCS1/FREQ; in a calcium-dependent manner. Interacts with F-actin and associates with the ARP2/3 complex. Interacts (via PDZ domain) with ARF1 (activated); the interaction blocks Arp2/3 complex inhibition. Interacts with SORCS3. Post-translationally, phosphorylation at Thr-82 appears to inhibit the interaction with AMPA receptors. Palmitoylation on Cys-414 is essential for long-term synaptic depression (LTD). As to expression, ubiquitous.

The protein resides in the cytoplasm. It is found in the perinuclear region. Its subcellular location is the membrane. It localises to the postsynaptic density. The protein localises to the synapse. The protein resides in the synaptosome. It is found in the cytoskeleton. In terms of biological role, probable adapter protein that bind to and organize the subcellular localization of a variety of membrane proteins containing some PDZ recognition sequence. Involved in the clustering of various receptors, possibly by acting at the receptor internalization level. Plays a role in synaptic plasticity by regulating the trafficking and internalization of AMPA receptors. May be regulated upon PRKCA activation. May regulate ASIC1/ASIC3 channel. Regulates actin polymerization by inhibiting the actin-nucleating activity of the Arp2/3 complex; the function is competitive with nucleation promoting factors and is linked to neuronal morphology regulation and AMPA receptor (AMPAR) endocytosis. Via interaction with the Arp2/3 complex involved in regulation of synaptic plasicity of excitatory synapses and required for spine shrinkage during long-term depression (LTD). Involved in regulation of astrocyte morphology, antagonistic to Arp2/3 complex activator WASL/N-WASP function. The polypeptide is PRKCA-binding protein (Pick1) (Rattus norvegicus (Rat)).